Reading from the N-terminus, the 244-residue chain is Pyridoxine 5'-phosphate synthase (244 aa).

A 3-amino-2-oxopropyl phosphate-binding site is contributed by asparagine 9. 11–12 (DH) provides a ligand contact to 1-deoxy-D-xylulose 5-phosphate. Residue arginine 20 coordinates 3-amino-2-oxopropyl phosphate. Residue histidine 45 is the Proton acceptor of the active site. 1-deoxy-D-xylulose 5-phosphate-binding residues include arginine 47 and histidine 52. Glutamate 72 (proton acceptor) is an active-site residue. Threonine 102 serves as a coordination point for 1-deoxy-D-xylulose 5-phosphate. The Proton donor role is filled by histidine 193. Residues glycine 194 and 215–216 (GH) contribute to the 3-amino-2-oxopropyl phosphate site.

This sequence belongs to the PNP synthase family. In terms of assembly, homooctamer; tetramer of dimers.

It localises to the cytoplasm. It catalyses the reaction 3-amino-2-oxopropyl phosphate + 1-deoxy-D-xylulose 5-phosphate = pyridoxine 5'-phosphate + phosphate + 2 H2O + H(+). It functions in the pathway cofactor biosynthesis; pyridoxine 5'-phosphate biosynthesis; pyridoxine 5'-phosphate from D-erythrose 4-phosphate: step 5/5. Functionally, catalyzes the complicated ring closure reaction between the two acyclic compounds 1-deoxy-D-xylulose-5-phosphate (DXP) and 3-amino-2-oxopropyl phosphate (1-amino-acetone-3-phosphate or AAP) to form pyridoxine 5'-phosphate (PNP) and inorganic phosphate. The sequence is that of Pyridoxine 5'-phosphate synthase from Blochmanniella pennsylvanica (strain BPEN).